The following is a 319-amino-acid chain: Vomeronasal type-1 receptor 96 (319 aa).

Residues 1–19 (MNKVNILPSDTNIKITLFS) lie on the Extracellular side of the membrane. The chain crosses the membrane as a helical span at residues 20 to 40 (EVSVGISANSVLFFAHLCMFF). The Cytoplasmic portion of the chain corresponds to 41–49 (EENRSKPID). A helical membrane pass occupies residues 50 to 70 (LCIAFLSLTQLMLLVTMGLIA). Over 71-93 (ADMFMSQGIWDSTTCRSIIYFHR) the chain is Extracellular. Residues cysteine 85 and cysteine 172 are joined by a disulfide bond. The helical transmembrane segment at 94 to 114 (LLRGFNLCAACLLHILWTFTL) threads the bilayer. The Cytoplasmic portion of the chain corresponds to 115–134 (SPRSSCLTKFKHKSPHHISC). The helical transmembrane segment at 135–155 (AFFSLCVLYMLFSSHLFVLII) threads the bilayer. Over 156 to 193 (ATSNLTSDHFMYVTQSCSILPMSYSRTTMFSLVMVTRE) the chain is Extracellular. N-linked (GlcNAc...) asparagine glycosylation is present at asparagine 159. The chain crosses the membrane as a helical span at residues 194–214 (AFLISLMALFSGYMVTLLWRH). Topologically, residues 215-238 (KKQVQHLHSTSLSSKSSPQQRATR) are cytoplasmic. The chain crosses the membrane as a helical span at residues 239–259 (TILLLMSFFVVLYILDIVIFQ). Residues 260 to 269 (SRTKFKDGSM) are Extracellular-facing. Residues 270–290 (FYSLHIIVSHSYATISPFVFI) form a helical membrane-spanning segment. Over 291–319 (FSDKRIIKFLGSMSGRIINICLFSDGYGP) the chain is Cytoplasmic.

It belongs to the G-protein coupled receptor 1 family.

The protein localises to the cell membrane. Putative pheromone receptor implicated in the regulation of social as well as reproductive behavior. This Rattus norvegicus (Rat) protein is Vomeronasal type-1 receptor 96 (Vom1r96).